Here is a 2788-residue protein sequence, read N- to C-terminus: MALGGALAAALALAFAVLGPLSHKVLAGDCKGQRQVLREAPGFVTDGAGNYSVNGNCEWLIEAPSPQHRILLDFLFLDTECTYDYLFVYDGDSPQGPLLASLSGSTRPPPIEASSGKMLLHLFSDANYNLLGFNASFRFSLCPGGCQNHGQCKSPGVCVCEPGWGGPDCGLQECSAYCGSHGTCASTLGPCRCEPGFLGRACDLHLWENQGAGWWHSVSAGDPAFSARVGAAGAFLSPPGLLAVFGGQDLNKALGDLVLYNFSTNTWESWDLTPAPAARHSHVAVAWAGFLVLMGGELANGLLTNDVWAFSPLGGGHWELLAPPASSSSGPPGLAGHAAALVDDIWLYVSGGRTQHDLFSSGLFRFRLDHTSRGYWEQVIPAGGRPPAATGHSMVFHAPSRTLLVHGGHRPSTARFSVRVNSTELFHVDRRVWTTLKGRDGLQGPRERAFHTASVLGNYMVVYGGNVHTHYQEEKCYEDGIFFYHLGCHQWVSGAELAPPGTPEGRAAPPSGRYSHVAAVLGGSVLLVAGGYSGRPRGDLMAYKVPPFVFQAPALDYHLDYCSMYTDHSVCSRDPECSWCQGACQSAPPPGTPSGACPAASCLGLGRLLSDCQACLAFSSPTAPPRGPGTLGWCVHNESCLPRPEQARCRGEQISGTVGWWGPAPVFVTSLEACVTQSFLPGLHLLTFQQPPNASQPDKVSIVRSTTITLTPSAETDVSLVYRGFIYPMLPGGPGGPGAEDVAVWARAQRLHVLARMARGPDTENMEEVGRWVAQQEKETRRLQRPGSSRLFPLPGRGNKYAVEIRGQLNGSAGPGHSELTLLWDRTGVPGGSEISFFFLEPYRSLACSSYSSCLGCLADQGCGWCLNSATCHLRQGRAHCEDDGNGESLLVLVPALCPLCEEHRDCHACTQDPFCEWHQSTNRKGDAACSRRGRGRGALKNPEECPPLCSQRLTCEDCLANSSQCAWCQSTHTCFLFAAYLARYPHGGCRGWDDSVHSEPRCRSCHGFLTCHECLQSHECGWCGNEDNPTLGRCLQGDFSGPLGGGNCSLWVGEGLGLPVALPARWAYARCPDVDECRLGLARCHPRATCLNTPLSYECHCQRGYQGDGITHCNRTCLEDCGHGVCSGPPDFTCVCDLGWTSDLPPPTPAPGPPAPRCSRDCGCNFHSHCRRRGPGYCDECQDWTWGEHCERCRPGSFGNATGSGGCRPCQCNGHGDPRRGHCDNLSGLCFCQDHTEGAHCQICSPGYYGDPRAGGSCFRECGGRALLTNVSSVALGSRRFGGLLPPGGGTARAGPGLSYCVWVVSATEALQPCAPGTLCPPLTLTFSPDSSTPCTLSYVLAFDGFPRFLDTGVVQSDRSLIAAFCGQRRDRPLTVQALSGLLVLHWEANGSSSWGFNASVGSARCGSGGPGSCPVPQECVPQDGAAGAGLCRCPQGWAGPHCRMALCPENCNAHTGAGICNQSLGVCICAEGFGGPDCATKLDGGQLVWETLMDSRLSADTASRFLHRLGHTMVEGPDATLWMFGGLGLPQGLLGNLYRYSVSERRWTQMLAGAEDGGPGPSPRSFHAAAYVPAGRGAMYLLGGLTAGGITCDFWVLNLTTLQWRQEKAPQSIELPAVAGHTLTARRGLSLLLVGGYSPENGFNQQLLEYQLATTWVSGAQSGTPPTGLYGHSAVYHEATDSLYVFGGFRFHVELAAPSPELYSLHCPDRTWSLLAPSQGAKPRPRLFHASALLGDTMVVLGGRSDPDEFSSDVLLYQVNCNTWLLPDLTRPAFVGSPMEESVAHAVAAVGSRLYISGGFGGVALGRLLALTLPPDPCRLLPSPEACNQSGACTWCHGACLSGDQAHRLGCGVPPCSPMPRSPEECRRLRTCSECLARHPRTLQPGDGEASVPRCKWCTNCPEGACIGRNGSCTSENDCRINQREVFWAGNCSEAACGAADCEQCTREGKCMWTRQFKRTGETRRILSVQPTYDWTCFSHSLLNVSPMPVESSPPLPCPTPCHLLPNCTSCLASKGADGGWQHCVWSSSLQQCLSPSYLPLRCMAGGCGRLLRGPESCSLGCAQATQCALCLRRPHCGWCAWGGQDGGGHCMEGGLSGPRDGLTCGRPGASWAFLSCPPEDECANGHHDCNETQNCHDQPHGYECSCKTGYTMDNVTGVCRPVCAQGCVNGSCVEPDHCRCHFGFVGRNCSTECRCNRHSECAGVGARDHCLLCRNHTKGSHCEQCLPLFVGSALGGGTCRPCHAFCRGNSHVCVSRKELEMARREPEKYSLDPEEIEAWVAEGPSEDEAVCVNCQNNSYGDRCESCLHGYFLLDGKCTKCQCNGHADTCNEQDGTGCPCQNNTETGVCQGSSPSDRRDCYKYQCAKCRESFHGSPLGGQQCYRLISVEQECCLDPTSQTNCFHEPKRRALGPGRTVLFGVQPKFTNVDIRLTLDVTFGAVDLYVSTSYDTFVVRVAPDTGVHTVHIQPPPPPPPPPPPADGVPRVASDLGGLGTGSGSGSPVEPRVREVWPRGLITYVTVTEPSAVLVVRSVRDRLVITYPHEHHALKSSRFYLLLLGVGDPNGPGANGSADSQGLLFFRQDQAHIDLFVFFSVFFSCFFLFLSLCVLLWKAKQALDQRQEQRRHLQEMTKMASRPFAKVTVCFPPDPAGPAPAWKPAGLPPPAFRRSEPFLAPLLLTGAGGPWGPMGGGCCPPALPATTAGLRAGPITLEPTEDGMAGVATLLLQLPGGPHAPNGACLGSALVTLRHRLHEYCGGSGGAGGSGHGGGGGRKGLLSQDNLTSMSL.

The signal sequence occupies residues 1–27 (MALGGALAAALALAFAVLGPLSHKVLA). Over 28–2590 (GDCKGQRQVL…FFRQDQAHID (2563 aa)) the chain is Extracellular. Disulfide bonds link Cys-30–Cys-57, Cys-142–Cys-152, Cys-146–Cys-158, Cys-174–Cys-184, Cys-178–Cys-191, and Cys-193–Cys-202. The 111-residue stretch at 30 to 140 (CKGQRQVLRE…LGFNASFRFS (111 aa)) folds into the CUB 1 domain. An N-linked (GlcNAc...) asparagine glycan is attached at Asn-50. 2 consecutive EGF-like domains span residues 138 to 168 (RFSL…GGPD) and 170 to 203 (GLQE…RACD). Kelch repeat units follow at residues 241 to 287 (LLAV…AVAW), 290 to 338 (FLVL…AGHA), 346 to 399 (WLYV…FHAP), 402 to 453 (TLLV…FHTA), 459 to 511 (YMVV…APPS), and 525 to 575 (VLLV…SRDP). PSI domains are found at residues 561–613 (YCSM…SDCQ), 847–899 (ACSS…ALCP), and 900–947 (LCEE…EECP). Asn-1048 carries N-linked (GlcNAc...) asparagine glycosylation. Positions 1074–1115 (DVDECRLGLARCHPRATCLNTPLSYECHCQRGYQGDGITHCN) constitute an EGF-like 3; calcium-binding domain. 16 disulfides stabilise this stretch: Cys-1078–Cys-1091, Cys-1085–Cys-1100, Cys-1102–Cys-1114, Cys-1163–Cys-1171, Cys-1165–Cys-1179, Cys-1182–Cys-1191, Cys-1194–Cys-1208, Cys-1211–Cys-1224, Cys-1213–Cys-1231, Cys-1233–Cys-1242, Cys-1245–Cys-1259, Cys-1263–Cys-1302, Cys-1336–Cys-1367, Cys-1407–Cys-1421, Cys-1415–Cys-1433, and Cys-1435–Cys-1444. Laminin EGF-like domains follow at residues 1163-1210 (CGCN…GCRP) and 1211-1261 (CQCN…SCFR). A CUB 2 domain is found at 1263–1405 (CGGRALLTNV…WGFNASVGSA (143 aa)). N-linked (GlcNAc...) asparagine glycosylation is present at Asn-1271. Thr-1353 is subject to Phosphothreonine. The region spanning 1403–1445 (GSARCGSGGPGSCPVPQECVPQDGAAGAGLCRCPQGWAGPHCR) is the EGF-like 4 domain. Kelch repeat units lie at residues 1522-1570 (TLWM…SFHA), 1580-1626 (AMYL…HTLT), 1632-1678 (SLLL…SAVY), 1684-1734 (SLYV…HASA), 1739-1786 (TMVV…ESVA), and 1795-1840 (RLYI…WCHG). PSI domains lie at 1819–1859 (PCRL…PPCS), 1867–1922 (ECRR…NDCR), 2003–2061 (PCHL…ESCS), and 2063–2120 (GCAQ…LSCP). N-linked (GlcNAc...) asparagine glycosylation occurs at Asn-2009. The region spanning 2121–2159 (PEDECANGHHDCNETQNCHDQPHGYECSCKTGYTMDNVT) is the EGF-like 5 domain. 2 cysteine pairs are disulfide-bonded: Cys-2125–Cys-2138 and Cys-2132–Cys-2147. N-linked (GlcNAc...) asparagine glycosylation is found at Asn-2157 and Asn-2172. Disulfide bonds link Cys-2196/Cys-2204, Cys-2198/Cys-2213, Cys-2216/Cys-2225, and Cys-2228/Cys-2242. 2 consecutive Laminin EGF-like domains span residues 2196–2244 (CRCN…TCRP) and 2323–2386 (CQCN…QCYR). The interval 2465 to 2507 (HTVHIQPPPPPPPPPPPADGVPRVASDLGGLGTGSGSGSPVEP) is disordered. Pro residues predominate over residues 2470–2483 (QPPPPPPPPPPPAD). Residues 2591-2611 (LFVFFSVFFSCFFLFLSLCVL) traverse the membrane as a helical segment. The Cytoplasmic portion of the chain corresponds to 2612–2788 (LWKAKQALDQ…SQDNLTSMSL (177 aa)). Gly residues predominate over residues 2761 to 2775 (GGAGGSGHGGGGGRK). Residues 2761–2788 (GGAGGSGHGGGGGRKGLLSQDNLTSMSL) form a disordered region. Residues 2779–2788 (SQDNLTSMSL) show a composition bias toward polar residues.

In terms of tissue distribution, expressed in brain.

The protein localises to the membrane. In terms of biological role, acts as a negative regulator of hedgehog signaling. This is Multiple epidermal growth factor-like domains protein 8 (Megf8) from Rattus norvegicus (Rat).